The following is a 283-amino-acid chain: Acetylglutamate kinase (283 aa).

Substrate is bound by residues 63–64, R85, and N178; that span reads GG.

Belongs to the acetylglutamate kinase family. ArgB subfamily.

It localises to the cytoplasm. It carries out the reaction N-acetyl-L-glutamate + ATP = N-acetyl-L-glutamyl 5-phosphate + ADP. It functions in the pathway amino-acid biosynthesis; L-arginine biosynthesis; N(2)-acetyl-L-ornithine from L-glutamate: step 2/4. Functionally, catalyzes the ATP-dependent phosphorylation of N-acetyl-L-glutamate. The chain is Acetylglutamate kinase from Prochlorococcus marinus (strain MIT 9215).